The sequence spans 349 residues: 4-hydroxy-3-methylbut-2-en-1-yl diphosphate synthase (flavodoxin) (349 aa).

4 residues coordinate [4Fe-4S] cluster: C264, C267, C299, and E306.

The protein belongs to the IspG family. It depends on [4Fe-4S] cluster as a cofactor.

The catalysed reaction is (2E)-4-hydroxy-3-methylbut-2-enyl diphosphate + oxidized [flavodoxin] + H2O + 2 H(+) = 2-C-methyl-D-erythritol 2,4-cyclic diphosphate + reduced [flavodoxin]. Its pathway is isoprenoid biosynthesis; isopentenyl diphosphate biosynthesis via DXP pathway; isopentenyl diphosphate from 1-deoxy-D-xylulose 5-phosphate: step 5/6. Functionally, converts 2C-methyl-D-erythritol 2,4-cyclodiphosphate (ME-2,4cPP) into 1-hydroxy-2-methyl-2-(E)-butenyl 4-diphosphate. This Clostridium perfringens (strain 13 / Type A) protein is 4-hydroxy-3-methylbut-2-en-1-yl diphosphate synthase (flavodoxin).